The chain runs to 286 residues: Probable xyloglucan endotransglucosylase/hydrolase protein 23 (286 aa).

An N-terminal signal peptide occupies residues 1 to 24; that stretch reads MAMISYSTIVVALLASFMICSVSA. Residues 25-214 form the GH16 domain; that stretch reads NFQRDVEITW…WSKAPFTASY (190 aa). The Nucleophile role is filled by Glu100. Glu104 functions as the Proton donor in the catalytic mechanism. Glu104 serves as a coordination point for xyloglucan. An N-linked (GlcNAc...) asparagine glycan is attached at Asn108. Residues 117–119, 127–129, 193–194, and Gly198 each bind xyloglucan; these read HTN, DRE, and EW. Cys222 and Cys231 form a disulfide bridge. Asn233 carries N-linked (GlcNAc...) asparagine glycosylation. Cys269 and Cys283 form a disulfide bridge. Residue Arg274 coordinates xyloglucan.

This sequence belongs to the glycosyl hydrolase 16 family. XTH group 2 subfamily. Post-translationally, contains at least one intrachain disulfide bond essential for its enzymatic activity.

The protein resides in the secreted. It is found in the cell wall. It localises to the extracellular space. The protein localises to the apoplast. The catalysed reaction is breaks a beta-(1-&gt;4) bond in the backbone of a xyloglucan and transfers the xyloglucanyl segment on to O-4 of the non-reducing terminal glucose residue of an acceptor, which can be a xyloglucan or an oligosaccharide of xyloglucan.. Functionally, catalyzes xyloglucan endohydrolysis (XEH) and/or endotransglycosylation (XET). Cleaves and religates xyloglucan polymers, an essential constituent of the primary cell wall, and thereby participates in cell wall construction of growing tissues. In Arabidopsis thaliana (Mouse-ear cress), this protein is Probable xyloglucan endotransglucosylase/hydrolase protein 23 (XTH23).